Consider the following 427-residue polypeptide: Enolase (427 aa).

Q163 contributes to the (2R)-2-phosphoglycerate binding site. The active-site Proton donor is E205. 3 residues coordinate Mg(2+): D242, E285, and D312. Positions 337, 366, 367, and 388 each coordinate (2R)-2-phosphoglycerate. K337 functions as the Proton acceptor in the catalytic mechanism.

This sequence belongs to the enolase family. Mg(2+) is required as a cofactor.

It localises to the cytoplasm. It is found in the secreted. The protein localises to the cell surface. The catalysed reaction is (2R)-2-phosphoglycerate = phosphoenolpyruvate + H2O. Its pathway is carbohydrate degradation; glycolysis; pyruvate from D-glyceraldehyde 3-phosphate: step 4/5. Functionally, catalyzes the reversible conversion of 2-phosphoglycerate (2-PG) into phosphoenolpyruvate (PEP). It is essential for the degradation of carbohydrates via glycolysis. This is Enolase from Burkholderia multivorans (strain ATCC 17616 / 249).